A 118-amino-acid chain; its full sequence is 5-hydroxyisourate hydrolase (118 aa).

Substrate contacts are provided by His-11, Arg-51, and Tyr-115.

This sequence belongs to the transthyretin family. 5-hydroxyisourate hydrolase subfamily. Homotetramer.

Its subcellular location is the peroxisome. It carries out the reaction 5-hydroxyisourate + H2O = 5-hydroxy-2-oxo-4-ureido-2,5-dihydro-1H-imidazole-5-carboxylate + H(+). Its pathway is purine metabolism; urate degradation; (S)-allantoin from urate: step 2/3. In terms of biological role, catalyzes the hydrolysis of 5-hydroxyisourate (HIU) to 2-oxo-4-hydroxy-4-carboxy-5-ureidoimidazoline (OHCU). In Mus musculus (Mouse), this protein is 5-hydroxyisourate hydrolase (Urah).